The chain runs to 489 residues: Zinc finger protein 772 (489 aa).

The region spanning 27 to 98 (VNFEDVFVYF…DWVDMTLAVA (72 aa)) is the KRAB domain. 10 consecutive C2H2-type zinc fingers follow at residues 144–166 (YPCG…QETH), 172–194 (YMCV…QKQH), 266–288 (YKCS…QRVH), 294–316 (YECG…QRIH), 322–344 (YECG…QRVH), 350–372 (YKCS…ESIH), 378–400 (YECS…WSVH), 406–428 (YECI…QRVH), 434–456 (YVCS…HRIH), and 462–484 (YKCS…WKIH).

Belongs to the krueppel C2H2-type zinc-finger protein family.

It localises to the nucleus. In terms of biological role, may be involved in transcriptional regulation. This is Zinc finger protein 772 (ZNF772) from Homo sapiens (Human).